Reading from the N-terminus, the 655-residue chain is Very long-chain specific acyl-CoA dehydrogenase, mitochondrial (655 aa).

The N-terminal 40 residues, 1-40, are a transit peptide targeting the mitochondrion; that stretch reads MQAARMAASLGRQLLRLGGGSSRLTALLGQPRPGPARRPY. Positions 23-42 are disordered; the sequence is RLTALLGQPRPGPARRPYAG. Residues 41 to 482 are catalytic; it reads AGGAAQLALD…ALQGCMDKGK (442 aa). N6-acetyllysine is present on lysine 51. Position 71 is an N6-acetyllysine; alternate (lysine 71). An N6-succinyllysine; alternate modification is found at lysine 71. An N6-succinyllysine modification is found at lysine 195. 214 to 223 contributes to the FAD binding site; that stretch reads FCLTEPSSGS. The residue at position 237 (cysteine 237) is an S-nitrosocysteine. Lysine 239 carries the N6-acetyllysine; alternate modification. Lysine 239 is modified (N6-succinyllysine; alternate). Position 249 to 251 (249 to 251) interacts with FAD; sequence WIS. N6-acetyllysine; alternate occurs at positions 276 and 278. N6-succinyllysine; alternate is present on residues lysine 276 and lysine 278. Lysine 298 is subject to N6-acetyllysine. The residue at position 331 (lysine 331) is an N6-acetyllysine; alternate. Position 331 is an N6-succinyllysine; alternate (lysine 331). Lysine 372 bears the N6-succinyllysine mark. 461–463 is a substrate binding site; that stretch reads FEG. The active-site Proton acceptor is glutamate 462. 464–466 lines the FAD pocket; the sequence is TND. At lysine 482 the chain carries N6-acetyllysine; alternate. At lysine 482 the chain carries N6-succinyllysine; alternate. The segment at 483 to 516 is membrane-anchoring; that stretch reads ELSGLGSALKNPFGNAGLLLGEAGKQLRRRAGLG. Phosphoserine occurs at positions 517 and 522. At lysine 550 the chain carries N6-acetyllysine. Lysine 556 carries the post-translational modification N6-acetyllysine; alternate. At lysine 556 the chain carries N6-succinyllysine; alternate. Glutamine 562 provides a ligand contact to FAD. At lysine 639 the chain carries N6-succinyllysine.

It belongs to the acyl-CoA dehydrogenase family. In terms of assembly, homodimer. Homodimerizes after import into the mitochondrion. FAD serves as cofactor. S-nitrosylation at Cys-237 in liver improves catalytic efficiency. As to expression, predominantly expressed in heart and skeletal muscle (at protein level). Also detected in kidney and liver (at protein level).

The protein localises to the mitochondrion inner membrane. The enzyme catalyses a very-long-chain 2,3-saturated fatty acyl-CoA + oxidized [electron-transfer flavoprotein] + H(+) = a very-long-chain (2E)-enoyl-CoA + reduced [electron-transfer flavoprotein]. The catalysed reaction is decanoyl-CoA + oxidized [electron-transfer flavoprotein] + H(+) = (2E)-decenoyl-CoA + reduced [electron-transfer flavoprotein]. It catalyses the reaction dodecanoyl-CoA + oxidized [electron-transfer flavoprotein] + H(+) = (2E)-dodecenoyl-CoA + reduced [electron-transfer flavoprotein]. It carries out the reaction tetradecanoyl-CoA + oxidized [electron-transfer flavoprotein] + H(+) = (2E)-tetradecenoyl-CoA + reduced [electron-transfer flavoprotein]. The enzyme catalyses oxidized [electron-transfer flavoprotein] + hexadecanoyl-CoA + H(+) = (2E)-hexadecenoyl-CoA + reduced [electron-transfer flavoprotein]. The catalysed reaction is octadecanoyl-CoA + oxidized [electron-transfer flavoprotein] + H(+) = (2E)-octadecenoyl-CoA + reduced [electron-transfer flavoprotein]. It catalyses the reaction eicosanoyl-CoA + oxidized [electron-transfer flavoprotein] + H(+) = (2E)-eicosenoyl-CoA + reduced [electron-transfer flavoprotein]. It carries out the reaction docosanoyl-CoA + oxidized [electron-transfer flavoprotein] + H(+) = (2E)-docosenoyl-CoA + reduced [electron-transfer flavoprotein]. The enzyme catalyses tetracosanoyl-CoA + oxidized [electron-transfer flavoprotein] + H(+) = (2E)-tetracosenoyl-CoA + reduced [electron-transfer flavoprotein]. The catalysed reaction is (9Z)-hexadecenoyl-CoA + oxidized [electron-transfer flavoprotein] + H(+) = (2E,9Z)-hexadecadienoyl-CoA + reduced [electron-transfer flavoprotein]. It catalyses the reaction oxidized [electron-transfer flavoprotein] + (9Z)-octadecenoyl-CoA + H(+) = (2E,9Z)-octadecadienoyl-CoA + reduced [electron-transfer flavoprotein]. It functions in the pathway lipid metabolism; mitochondrial fatty acid beta-oxidation. Functionally, very long-chain specific acyl-CoA dehydrogenase is one of the acyl-CoA dehydrogenases that catalyze the first step of mitochondrial fatty acid beta-oxidation, an aerobic process breaking down fatty acids into acetyl-CoA and allowing the production of energy from fats. The first step of fatty acid beta-oxidation consists in the removal of one hydrogen from C-2 and C-3 of the straight-chain fatty acyl-CoA thioester, resulting in the formation of trans-2-enoyl-CoA. Among the different mitochondrial acyl-CoA dehydrogenases, very long-chain specific acyl-CoA dehydrogenase acts specifically on acyl-CoAs with saturated 12 to 24 carbons long primary chains. The sequence is that of Very long-chain specific acyl-CoA dehydrogenase, mitochondrial from Homo sapiens (Human).